The following is a 723-amino-acid chain: Polyribonucleotide nucleotidyltransferase (723 aa).

Mg(2+) is bound by residues Asp487 and Asp493. The KH domain occupies Pro554–Ile613. Positions Gly623 to Lys691 constitute an S1 motif domain. Residues Gly702–Pro723 are disordered. Basic residues predominate over residues Lys711–Pro723.

This sequence belongs to the polyribonucleotide nucleotidyltransferase family. It depends on Mg(2+) as a cofactor.

It localises to the cytoplasm. It carries out the reaction RNA(n+1) + phosphate = RNA(n) + a ribonucleoside 5'-diphosphate. Its function is as follows. Involved in mRNA degradation. Catalyzes the phosphorolysis of single-stranded polyribonucleotides processively in the 3'- to 5'-direction. The chain is Polyribonucleotide nucleotidyltransferase from Geobacillus kaustophilus (strain HTA426).